Reading from the N-terminus, the 299-residue chain is Oxygen-dependent coproporphyrinogen-III oxidase (299 aa).

S92 lines the substrate pocket. The a divalent metal cation site is built by H96 and H106. H106 serves as the catalytic Proton donor. 108-110 provides a ligand contact to substrate; it reads NVR. The a divalent metal cation site is built by H145 and H175. Residues 240-275 form an important for dimerization region; the sequence is YVEFNLVWDRGTLFGLQTGGRTESILMSMPPLVRWE. 258–260 serves as a coordination point for substrate; the sequence is GGR.

The protein belongs to the aerobic coproporphyrinogen-III oxidase family. In terms of assembly, homodimer. Requires a divalent metal cation as cofactor.

The protein localises to the cytoplasm. It carries out the reaction coproporphyrinogen III + O2 + 2 H(+) = protoporphyrinogen IX + 2 CO2 + 2 H2O. It participates in porphyrin-containing compound metabolism; protoporphyrin-IX biosynthesis; protoporphyrinogen-IX from coproporphyrinogen-III (O2 route): step 1/1. Its function is as follows. Involved in the heme biosynthesis. Catalyzes the aerobic oxidative decarboxylation of propionate groups of rings A and B of coproporphyrinogen-III to yield the vinyl groups in protoporphyrinogen-IX. The sequence is that of Oxygen-dependent coproporphyrinogen-III oxidase from Citrobacter koseri (strain ATCC BAA-895 / CDC 4225-83 / SGSC4696).